A 509-amino-acid chain; its full sequence is ATP synthase subunit alpha (509 aa).

169–176 (GDRQTGKT) is an ATP binding site.

The protein belongs to the ATPase alpha/beta chains family. F-type ATPases have 2 components, CF(1) - the catalytic core - and CF(0) - the membrane proton channel. CF(1) has five subunits: alpha(3), beta(3), gamma(1), delta(1), epsilon(1). CF(0) has three main subunits: a(1), b(2) and c(9-12). The alpha and beta chains form an alternating ring which encloses part of the gamma chain. CF(1) is attached to CF(0) by a central stalk formed by the gamma and epsilon chains, while a peripheral stalk is formed by the delta and b chains.

Its subcellular location is the cell inner membrane. It catalyses the reaction ATP + H2O + 4 H(+)(in) = ADP + phosphate + 5 H(+)(out). In terms of biological role, produces ATP from ADP in the presence of a proton gradient across the membrane. The alpha chain is a regulatory subunit. This Xanthobacter autotrophicus (strain ATCC BAA-1158 / Py2) protein is ATP synthase subunit alpha.